Consider the following 326-residue polypeptide: NAD kinase (326 aa).

The active-site Proton acceptor is Asp93. NAD(+) is bound by residues 93 to 94, Arg98, 171 to 172, Arg182, Asp201, and 212 to 217; these read DG, NE, and TAHAFS.

It belongs to the NAD kinase family. It depends on a divalent metal cation as a cofactor.

It is found in the cytoplasm. The enzyme catalyses NAD(+) + ATP = ADP + NADP(+) + H(+). Its function is as follows. Involved in the regulation of the intracellular balance of NAD and NADP, and is a key enzyme in the biosynthesis of NADP. Catalyzes specifically the phosphorylation on 2'-hydroxyl of the adenosine moiety of NAD to yield NADP. In Thermobifida fusca (strain YX), this protein is NAD kinase.